An 84-amino-acid chain; its full sequence is Large ribosomal subunit protein bL27 (84 aa).

The disordered stretch occupies residues 1–22 (MAHKKAGGSTRNGRDSESKRLG).

It belongs to the bacterial ribosomal protein bL27 family.

The chain is Large ribosomal subunit protein bL27 from Shewanella woodyi (strain ATCC 51908 / MS32).